Consider the following 180-residue polypeptide: Signaling threshold-regulating transmembrane adapter 1 (180 aa).

Residues 1–24 (MSRDYNCTTDDQLAWGIPSISHAW) are Extracellular-facing. Asn6 carries an N-linked (GlcNAc...) asparagine glycan. A helical; Signal-anchor for type III membrane protein membrane pass occupies residues 25–45 (GLWALLGVVTVLLLISLAALL). Topologically, residues 46–180 (SQWTRGRRRN…AYANSQPAPS (135 aa)) are cytoplasmic. Phosphoserine is present on residues Ser63 and Ser66. Tyr73 is modified (phosphotyrosine). Positions 73–76 (YGNL) are interaction with GRB2. The interval 81–103 (TGRLSQEPRSEEQDPPSSGGLAR) is disordered. 2 positions are modified to phosphoserine: Ser85 and Ser90. Phosphotyrosine is present on residues Tyr111, Tyr132, and Tyr153. An interaction with PTPN11 region spans residues 130–135 (IKYCEV). The interaction with CSK stretch occupies residues 153–156 (YASV). Phosphoserine is present on Ser166. Tyr172 carries the phosphotyrosine modification. An interaction with GRB2 region spans residues 172–175 (YANS).

Homodimer; disulfide-linked. When phosphorylated, interacts with PTPN11/SHP2, GRB2 and CSK. Post-translationally, phosphorylated on tyrosines upon TCR activation; which leads to the recruitment of PTPN11, GRB2 and CSK. As to expression, expressed in thymus and spleen, with highest levels in immature thymocytes (at protein level).

It localises to the cell membrane. Negatively regulates T-cell antigen receptor (TCR)-mediated signaling. Involved in positive selection of T-cells. The chain is Signaling threshold-regulating transmembrane adapter 1 (Sit1) from Mus musculus (Mouse).